The following is a 203-amino-acid chain: Dephospho-CoA kinase (203 aa).

Residues 6–203 (ILGLTGGIGS…FYLTLRGGRA (198 aa)) enclose the DPCK domain. 14-19 (GSGKSA) provides a ligand contact to ATP.

This sequence belongs to the CoaE family.

The protein localises to the cytoplasm. The catalysed reaction is 3'-dephospho-CoA + ATP = ADP + CoA + H(+). Its pathway is cofactor biosynthesis; coenzyme A biosynthesis; CoA from (R)-pantothenate: step 5/5. Catalyzes the phosphorylation of the 3'-hydroxyl group of dephosphocoenzyme A to form coenzyme A. The protein is Dephospho-CoA kinase of Pseudomonas aeruginosa (strain ATCC 15692 / DSM 22644 / CIP 104116 / JCM 14847 / LMG 12228 / 1C / PRS 101 / PAO1).